The following is a 552-amino-acid chain: Urocanate hydratase (552 aa).

NAD(+)-binding positions include 49–50 (GG), Q127, 173–175 (GMG), D193, 239–240 (NA), 260–264 (QTSAH), 270–271 (YI), and Y319. The active site involves C407. G489 contributes to the NAD(+) binding site.

The protein belongs to the urocanase family. It depends on NAD(+) as a cofactor.

It is found in the cytoplasm. It carries out the reaction 4-imidazolone-5-propanoate = trans-urocanate + H2O. It functions in the pathway amino-acid degradation; L-histidine degradation into L-glutamate; N-formimidoyl-L-glutamate from L-histidine: step 2/3. Its function is as follows. Catalyzes the conversion of urocanate to 4-imidazolone-5-propionate. The polypeptide is Urocanate hydratase (Bacillus cereus (strain AH187)).